Reading from the N-terminus, the 134-residue chain is Small ribosomal subunit protein uS9c (134 aa).

This sequence belongs to the universal ribosomal protein uS9 family.

It is found in the plastid. Its subcellular location is the chloroplast. The sequence is that of Small ribosomal subunit protein uS9c (rps9) from Euglena gracilis.